The primary structure comprises 886 residues: CRM-domain containing factor CFM3, chloroplastic/mitochondrial (886 aa).

Residues 1–70 (MAAAAMAISP…LDLRPEPSPS (70 aa)) constitute a chloroplast and mitochondrion transit peptide. 2 disordered regions span residues 56–84 (RPASALDLRPEPSPSSDSDDDAAFGTSRS) and 269–291 (TKGTSKNTQTLGMKSSIKEPPGH). CRM domains lie at 174–270 (LTLP…EPTK), 378–475 (PSLS…ELAE), and 590–690 (ETIT…SKLR). Over residues 270 to 281 (KGTSKNTQTLGM) the composition is skewed to polar residues. Residues 771-886 (SFDNSVAVQN…QSTELTNTCS (116 aa)) form a disordered region. The segment covering 793 to 827 (NSDDEGDYSDEDDDEDDDNDEEDGFDYENDDEDDV) has biased composition (acidic residues). Composition is skewed to polar residues over residues 841–852 (DFGSSDSENYVS) and 869–886 (DSRNSYSEQSTELTNTCS).

In terms of assembly, interacts with RNA. Part of large ribonucleo-protein particles that contain CAF1 and/or CAF2, and RNC1.

The protein localises to the plastid. It is found in the chloroplast. Its subcellular location is the mitochondrion. Binds specific group II introns in chloroplasts and facilitates their splicing. Acts on subgroup IIB introns. The substrates of the subgroup IIB also require the CRM domain proteins CAF1 or CAF2, with a simultaneous binding of CFM3 and CAF1 or CAF2. May influence the biogenesis of the mitochondrial small ribosomal subunit. The protein is CRM-domain containing factor CFM3, chloroplastic/mitochondrial of Oryza sativa subsp. japonica (Rice).